The sequence spans 475 residues: Adenosylhomocysteinase (475 aa).

Threonine 66, aspartate 141, and glutamate 201 together coordinate substrate. An NAD(+)-binding site is contributed by 202–204 (TTT). The substrate site is built by lysine 231 and aspartate 235. Residues asparagine 236, 265-270 (GYGEVG), glutamate 288, asparagine 323, 344-346 (IGH), and asparagine 389 each bind NAD(+).

It belongs to the adenosylhomocysteinase family. NAD(+) is required as a cofactor.

The protein resides in the cytoplasm. It catalyses the reaction S-adenosyl-L-homocysteine + H2O = L-homocysteine + adenosine. It functions in the pathway amino-acid biosynthesis; L-homocysteine biosynthesis; L-homocysteine from S-adenosyl-L-homocysteine: step 1/1. May play a key role in the regulation of the intracellular concentration of adenosylhomocysteine. The protein is Adenosylhomocysteinase of Geobacter sulfurreducens (strain ATCC 51573 / DSM 12127 / PCA).